The primary structure comprises 464 residues: 3-isopropylmalate dehydratase large subunit (464 aa).

[4Fe-4S] cluster is bound by residues cysteine 337, cysteine 397, and cysteine 400.

Belongs to the aconitase/IPM isomerase family. LeuC type 1 subfamily. In terms of assembly, heterodimer of LeuC and LeuD. It depends on [4Fe-4S] cluster as a cofactor.

It carries out the reaction (2R,3S)-3-isopropylmalate = (2S)-2-isopropylmalate. The protein operates within amino-acid biosynthesis; L-leucine biosynthesis; L-leucine from 3-methyl-2-oxobutanoate: step 2/4. Its function is as follows. Catalyzes the isomerization between 2-isopropylmalate and 3-isopropylmalate, via the formation of 2-isopropylmaleate. The chain is 3-isopropylmalate dehydratase large subunit from Bacillus cereus (strain AH187).